Consider the following 97-residue polypeptide: Small integral membrane protein 8 (97 aa).

The interval 1–24 (MSSAPEPPTFKKEPPKEKEFQSPG) is disordered. A compositionally biased stretch (basic and acidic residues) spans 9 to 20 (TFKKEPPKEKEF). Residues 48 to 70 (PVMAFGLVTLSLCVAYIGYLHAI) traverse the membrane as a helical segment.

This sequence belongs to the SMIM8 family.

It localises to the membrane. In Homo sapiens (Human), this protein is Small integral membrane protein 8 (SMIM8).